The following is a 267-amino-acid chain: Oxidoreductase ordB (267 aa).

The protein belongs to the avfA family.

The protein operates within mycotoxin biosynthesis. Functionally, oxidoreductase; part of the fragmented gene cluster that mediates the biosynthesis of dothistromin (DOTH), a polyketide toxin very similar in structure to the aflatoxin precursor, versicolorin B. The first step of the pathway is the conversion of acetate to norsolorinic acid (NOR) and requires the fatty acid synthase subunits hexA and hexB, as well as the polyketide synthase pksA. PksA combines a hexanoyl starter unit and 7 malonyl-CoA extender units to synthesize the precursor NOR. The hexanoyl starter unit is provided to the acyl-carrier protein (ACP) domain by the fungal fatty acid synthase hexA/hexB. The second step is the conversion of NOR to averantin (AVN) and requires the norsolorinic acid ketoreductase nor1, which catalyzes the dehydration of norsolorinic acid to form (1'S)-averantin. The cytochrome P450 monooxygenase avnA then catalyzes the hydroxylation of AVN to 5'hydroxyaverantin (HAVN). The next step is performed by adhA that transforms HAVN to averufin (AVF). Averufin might then be converted to hydroxyversicolorone by cypX and avfA. Hydroxyversicolorone is further converted versiconal hemiacetal acetate (VHA) by moxY. VHA is then the substrate for the versiconal hemiacetal acetate esterase est1 to yield versiconal (VAL). Versicolorin B synthase vbsA then converts VAL to versicolorin B (VERB) by closing the bisfuran ring. Then, the activity of the versicolorin B desaturase verB leads to versicolorin A (VERA). DotB, a predicted chloroperoxidase, may perform epoxidation of the A-ring of VERA. Alternatively, a cytochrome P450, such as cypX or avnA could catalyze this step. It is also possible that another, uncharacterized, cytochrome P450 enzyme is responsible for this step. Opening of the epoxide could potentially be achieved by the epoxide hydrolase epoA. However, epoA seems not to be required for DOTH biosynthesis, but other epoxide hydrolases may have the ability to complement this hydrolysis. Alternatively, opening of the epoxide ring could be achieved non-enzymatically. The next step is the deoxygenation of ring A to yield the 5,8-dihydroxyanthraquinone which is most likely catalyzed by the NADPH dehydrogenase encoded by ver1. The last stages of DOTH biosynthesis are proposed to involve hydroxylation of the bisfuran. OrdB and norB might have oxidative roles here. An alternative possibility is that cytochrome P450 monoogenases such as avnA and cypX might perform these steps in addition to previously proposed steps. The chain is Oxidoreductase ordB from Dothistroma septosporum (strain NZE10 / CBS 128990) (Red band needle blight fungus).